The following is a 134-amino-acid chain: MSWQAYVDDHLMCEVEGNPGQTLTAAAIIGHDGSVWAQSSTFPQIKPEEIAGIMKDFDEPGHLAPTGLYLGGAKYMVIQGEPNAVIRGKKGSGGVTIKKTGQALVFGVYDEPVTPGQCNVIVERLGDYLIDQGL.

It belongs to the profilin family. In terms of assembly, occurs in many kinds of cells as a complex with monomeric actin in a 1:1 ratio.

It localises to the cytoplasm. It is found in the cytoskeleton. Its function is as follows. Binds to actin and affects the structure of the cytoskeleton. At high concentrations, profilin prevents the polymerization of actin, whereas it enhances it at low concentrations. By binding to PIP2, it inhibits the formation of IP3 and DG. The protein is Profilin of Apium graveolens (Celery).